Reading from the N-terminus, the 745-residue chain is Copper-transporting ATPase (745 aa).

The HMA domain maps to 1-67; sequence MKESFYIEGM…LIEKLGYSPK (67 aa). The Cytoplasmic portion of the chain corresponds to 1-83; it reads MKESFYIEGM…KKEFFSPNVK (83 aa). Cys12 and Cys15 together coordinate Cu cation. Residues 84 to 104 traverse the membrane as a helical segment; that stretch reads LALAVIFTLFVVYLSMGAMLS. Residues 105–124 are Extracellular-facing; it reads PSLLPESLLAIDNHSNFLNA. A helical transmembrane segment spans residues 125–144; the sequence is CLQLIGALIVMHLGRDFYIQ. The Cytoplasmic portion of the chain corresponds to 145–151; sequence GFKALWH. Residues 152-172 form a helical membrane-spanning segment; that stretch reads RQPNMSSLIAIGTSAALISSL. The Extracellular segment spans residues 173-194; sequence WQLYLVYTNHYTDQWSYGHYYF. The chain crosses the membrane as a helical span at residues 195 to 215; sequence ESVCVILMFVMVGKRIENVSK. Residues 216 to 343 are Cytoplasmic-facing; it reads DKALDAMQAL…KAEISRLADK (128 aa). The helical transmembrane segment at 344–366 threads the bilayer; sequence VSSVFVPSVIAISILAFVVWLII. At 367 to 379 the chain is on the extracellular side; sequence APKPDFWWNFGIA. Residues 380–397 traverse the membrane as a helical segment; sequence LEVFVSVLVISCPCALGL. Topologically, residues 398-685 are cytoplasmic; sequence ATPMSILVAN…KLSQATIKNI (288 aa). Catalysis depends on Asp435, which acts as the 4-aspartylphosphate intermediate. The Mg(2+) site is built by Asp631 and Asp635. Residues 686–705 traverse the membrane as a helical segment; that stretch reads KENLFWAFCYNSVFIPLACG. Residues 706–716 lie on the Extracellular side of the membrane; it reads VLYKANLMLSP. The chain crosses the membrane as a helical span at residues 717–735; that stretch reads AIAGLAMSLSSVSVVLNSQ. Topologically, residues 736-745 are cytoplasmic; that stretch reads RLRNFKIKDH.

The protein belongs to the cation transport ATPase (P-type) (TC 3.A.3) family. Type IB subfamily.

It localises to the cell membrane. The enzyme catalyses Cu(2+)(in) + ATP + H2O = Cu(2+)(out) + ADP + phosphate + H(+). In terms of biological role, probably involved in copper export. This chain is Copper-transporting ATPase (copA), found in Helicobacter pylori (strain ATCC 700392 / 26695) (Campylobacter pylori).